The following is a 122-amino-acid chain: Small ribosomal subunit protein uS13 (122 aa).

Positions 93 to 122 (RRGLPVRGQKTKTNARTRKGPKKTMANKKK) are disordered.

Belongs to the universal ribosomal protein uS13 family. Part of the 30S ribosomal subunit. Forms a loose heterodimer with protein S19. Forms two bridges to the 50S subunit in the 70S ribosome.

In terms of biological role, located at the top of the head of the 30S subunit, it contacts several helices of the 16S rRNA. In the 70S ribosome it contacts the 23S rRNA (bridge B1a) and protein L5 of the 50S subunit (bridge B1b), connecting the 2 subunits; these bridges are implicated in subunit movement. Contacts the tRNAs in the A and P-sites. In Clostridium botulinum (strain Alaska E43 / Type E3), this protein is Small ribosomal subunit protein uS13.